The sequence spans 436 residues: Adenylosuccinate synthetase (436 aa).

Residues 22–28 and 50–52 each bind GTP; these read GDEGKGK and GHE. Catalysis depends on aspartate 23, which acts as the Proton acceptor. Mg(2+) is bound by residues aspartate 23 and glycine 50. IMP contacts are provided by residues 23–26, 48–51, threonine 141, arginine 155, asparagine 231, threonine 246, and arginine 310; these read DEGK and NAGH. The active-site Proton donor is histidine 51. 306-312 lines the substrate pocket; sequence VSTARVR. GTP is bound by residues arginine 312, 338 to 340, and 424 to 426; these read KMD and GVG.

The protein belongs to the adenylosuccinate synthetase family. In terms of assembly, homodimer. The cofactor is Mg(2+).

The protein localises to the cytoplasm. It carries out the reaction IMP + L-aspartate + GTP = N(6)-(1,2-dicarboxyethyl)-AMP + GDP + phosphate + 2 H(+). It participates in purine metabolism; AMP biosynthesis via de novo pathway; AMP from IMP: step 1/2. Functionally, plays an important role in the salvage pathway for purine nucleotide biosynthesis. Catalyzes the first committed step in the biosynthesis of AMP from IMP. This chain is Adenylosuccinate synthetase, found in Babesia bovis.